The primary structure comprises 549 residues: MEGVLYKWTNYISGWQPRWFVLEGGTLSYYDSQEDAWKGCKGSIKISVCEIQVHPSDFTRVDLIIPGEQYFYLRAINAAERQKWLVALGTAKACLTDNRTKREKELQENSEALKTKMSELRLYCDLLLQQVNKIQESPLAETSAGSGEGGDETGNLVKSTCTTFLKTLEECMHIASRTFNPDLLSRTPPGSPSVATIKPQKIKSNDPKNLHPGETRKDLINTSGTSAHESGPDNEPPPSPQENISTAHTESGLMEDQNDLIEPNNGSSSSTQDHEEPVEEQQTDGSTEDADHSQEEQQEVSMSPTQNKQEVQEDIQTDLELNETQSENKQEEEDEDKVDTFFSTMSHRFSDIILEEDSGIPTQAFLDSCYAIVPVLDKLGPTVFAPVKIDFVGNIKKIQQKVVSDPESFPTLQSIVLHEVKTEVAQVRNSATEALLWLKRGLKFLKEFLSEINTGVKDVQGALYNAYGKTLRQYHGWVVRGVFALALRAAPSYEGFMAALVSYEGDELKEGFRTGMHRDLDIYLPAMENQLSILDTLYEEYGLESDEIV.

The PH domain maps to 1-93 (MEGVLYKWTN…WLVALGTAKA (93 aa)). Disordered regions lie at residues 180–245 (NPDL…ENIS) and 257–312 (QNDL…QEVQ). A compositionally biased stretch (basic and acidic residues) spans 203–219 (KSNDPKNLHPGETRKDL). A compositionally biased stretch (acidic residues) spans 276 to 288 (EPVEEQQTDGSTE). Over residues 299–309 (EVSMSPTQNKQ) the composition is skewed to polar residues.

It is found in the cytoplasm. The protein resides in the golgi apparatus. The protein localises to the trans-Golgi network membrane. It localises to the membrane. In terms of biological role, cargo transport protein that is required for apical transport from the trans-Golgi network (TGN) to the plasma membrane. In Danio rerio (Zebrafish), this protein is Pleckstrin homology domain-containing family A member 8 (plekha8).